We begin with the raw amino-acid sequence, 725 residues long: Catalase-peroxidase 1 (725 aa).

The tryptophyl-tyrosyl-methioninium (Trp-Tyr) (with M-250) cross-link spans 96 to 224 (WHSAGSYRLA…LAAVQMGLIY (129 aa)). The active-site Proton acceptor is the histidine 97. A cross-link (tryptophyl-tyrosyl-methioninium (Tyr-Met) (with W-96)) is located at residues 224–250 (YVNPEGVDGNPDPLRTAKDVRETFKRM). Residue histidine 265 participates in heme b binding.

The protein belongs to the peroxidase family. Peroxidase/catalase subfamily. As to quaternary structure, homodimer or homotetramer. Heme b serves as cofactor. In terms of processing, formation of the three residue Trp-Tyr-Met cross-link is important for the catalase, but not the peroxidase activity of the enzyme.

It carries out the reaction H2O2 + AH2 = A + 2 H2O. It catalyses the reaction 2 H2O2 = O2 + 2 H2O. Its function is as follows. Bifunctional enzyme with both catalase and broad-spectrum peroxidase activity. The polypeptide is Catalase-peroxidase 1 (Idiomarina loihiensis (strain ATCC BAA-735 / DSM 15497 / L2-TR)).